The sequence spans 326 residues: RNA/RNP complex-1-interacting phosphatase (326 aa).

The segment at 1-28 is disordered; it reads MNQWHYGRYSRGRDFTARAPPKKKGKNQ. The 148-residue stretch at 59–206 folds into the Tyrosine-protein phosphatase domain; it reads FEAKLMPEEC…LQKRRVRKNQ (148 aa). Cysteine 150 serves as the catalytic Phosphocysteine intermediate. Residue 151–156 participates in substrate binding; that stretch reads THGLNR. Arginine 156 (proton donor/acceptor) is an active-site residue. Positions 200–258 are disordered; that stretch reads RRVRKNQNASASRSGGLEDSAHLTEQVHTTNKPVNKGPKKSRRGGHLESSQHVQTQSSA. The span at 247–258 shows a compositional bias: polar residues; the sequence is ESSQHVQTQSSA.

This sequence belongs to the protein-tyrosine phosphatase family. Non-receptor class dual specificity subfamily. As to quaternary structure, monomer. May interact with SFRS7 and SFRS9/SRP30C.

The protein resides in the nucleus. It is found in the nucleus speckle. Possesses RNA 5'-triphosphatase and diphosphatase activities, but displays a poor protein-tyrosine phosphatase activity. In addition, has phosphatase activity with ATP, ADP and O-methylfluorescein phosphate (in vitro). Binds to RNA. May participate in nuclear mRNA metabolism. The protein is RNA/RNP complex-1-interacting phosphatase (Dusp11) of Rattus norvegicus (Rat).